We begin with the raw amino-acid sequence, 90 residues long: Probable Fe(2+)-trafficking protein (90 aa).

Belongs to the Fe(2+)-trafficking protein family.

In terms of biological role, could be a mediator in iron transactions between iron acquisition and iron-requiring processes, such as synthesis and/or repair of Fe-S clusters in biosynthetic enzymes. This chain is Probable Fe(2+)-trafficking protein, found in Pseudomonas entomophila (strain L48).